A 264-amino-acid chain; its full sequence is Splicing factor U2af 38 kDa subunit (264 aa).

The C3H1-type 1 zinc finger occupies 12–40 (EKDKVNCSFYFKIGACRHGDRCSRIHNKP). Ser19 is modified (phosphoserine). The region spanning 44 to 149 (QTVLLQNLYV…RPVYSELSPV (106 aa)) is the RRM domain. Residues 151–178 (DFREACCRQYEMGECTRSGFCNFMHLKP) form a C3H1-type 2 zinc finger. The span at 190–219 (RRRRARSRSRSPGRRRGSRSRSRSPGRRGG) shows a compositional bias: basic residues. The segment at 190-264 (RRRRARSRSR…GGGGGGGGRY (75 aa)) is disordered. The span at 233–251 (NERDNMRGNDRGNDRDRRK) shows a compositional bias: basic and acidic residues. A compositionally biased stretch (gly residues) spans 253–264 (GGGGGGGGGGRY).

It belongs to the splicing factor SR family. Associates with a 65 kDa protein.

The protein localises to the nucleus. In terms of biological role, necessary for the splicing of pre-mRNA. Binds to the polypyrimidine tract of introns early during spliceosome assembly. The chain is Splicing factor U2af 38 kDa subunit (U2af38) from Drosophila melanogaster (Fruit fly).